The primary structure comprises 122 residues: Putative ankyrin repeat protein L22 (122 aa).

ANK repeat units lie at residues 3-32 (DNNY…DIKA), 33-62 (DDDY…DIRV), 63-92 (NNDY…NIRA), and 94-122 (DDYA…VLNQ).

The protein is Putative ankyrin repeat protein L22 of Acanthamoeba polyphaga (Amoeba).